Reading from the N-terminus, the 503-residue chain is Transcription termination/antitermination protein NusA (503 aa).

In terms of domain architecture, S1 motif spans 139 to 203; sequence GEIINGIVKR…KGPQIFLSRV (65 aa). A KH domain is found at 308–378; sequence RHKVEVVVSQ…LDVEEVIGQL (71 aa).

Belongs to the NusA family. As to quaternary structure, monomer. Binds directly to the core enzyme of the DNA-dependent RNA polymerase and to nascent RNA.

It localises to the cytoplasm. Participates in both transcription termination and antitermination. The sequence is that of Transcription termination/antitermination protein NusA from Rickettsia conorii (strain ATCC VR-613 / Malish 7).